Reading from the N-terminus, the 599-residue chain is Retrotransposon Gag-like protein 5 (599 aa).

3 disordered regions span residues 77–97 (DPTPEEEEEEEEEVPFLCWPP), 116–139 (DYTNPDGSSDPPLSPSPSQPELHS), and 377–450 (FPQE…EEDE). Over residues 78 to 90 (PTPEEEEEEEEEV) the composition is skewed to acidic residues. Composition is skewed to acidic residues over residues 393-432 (DEMEDEEDEDEDEDYEFEEEDEDDDDEEEEEEEEEEEDKE) and 439-450 (DSDENKYEEEDE).

This chain is Retrotransposon Gag-like protein 5, found in Mus musculus (Mouse).